The following is a 758-amino-acid chain: 5-methyltetrahydropteroyltriglutamate--homocysteine methyltransferase (758 aa).

5-methyltetrahydropteroyltri-L-glutamate-binding positions include 16–19 (RELK) and K117. Residues 436-438 (IGS) and E489 each bind L-homocysteine. L-methionine is bound by residues 436–438 (IGS) and E489. 5-methyltetrahydropteroyltri-L-glutamate-binding positions include 520 to 521 (RC) and W566. D604 contacts L-homocysteine. Residue D604 participates in L-methionine binding. E610 is a binding site for 5-methyltetrahydropteroyltri-L-glutamate. 3 residues coordinate Zn(2+): H646, C648, and E670. H699 serves as the catalytic Proton donor. C731 is a Zn(2+) binding site.

Belongs to the vitamin-B12 independent methionine synthase family. Requires Zn(2+) as cofactor.

It carries out the reaction 5-methyltetrahydropteroyltri-L-glutamate + L-homocysteine = tetrahydropteroyltri-L-glutamate + L-methionine. It participates in amino-acid biosynthesis; L-methionine biosynthesis via de novo pathway; L-methionine from L-homocysteine (MetE route): step 1/1. Functionally, catalyzes the transfer of a methyl group from 5-methyltetrahydrofolate to homocysteine resulting in methionine formation. This chain is 5-methyltetrahydropteroyltriglutamate--homocysteine methyltransferase, found in Ruthia magnifica subsp. Calyptogena magnifica.